The primary structure comprises 93 residues: Cell division protein CrgA (93 aa).

A run of 2 helical transmembrane segments spans residues 31–51 and 70–90; these read VWFV…LMVF and LGPW…LLTM.

The protein belongs to the CrgA family.

Its subcellular location is the cell membrane. In terms of biological role, involved in cell division. This is Cell division protein CrgA from Mycobacterium avium (strain 104).